A 100-amino-acid polypeptide reads, in one-letter code: Large ribosomal subunit protein bL21 (100 aa).

This sequence belongs to the bacterial ribosomal protein bL21 family. As to quaternary structure, part of the 50S ribosomal subunit. Contacts protein L20.

In terms of biological role, this protein binds to 23S rRNA in the presence of protein L20. This chain is Large ribosomal subunit protein bL21, found in Corynebacterium urealyticum (strain ATCC 43042 / DSM 7109).